We begin with the raw amino-acid sequence, 145 residues long: Protein X (145 aa).

Residues proline 68–phenylalanine 117 form a mitochondrial targeting sequence region.

It belongs to the orthohepadnavirus protein X family. As to quaternary structure, may form homodimer. May interact with host CEBPA, CFLAR, CREB1, DDB1, E4F1, HBXIP, HSPD1/HSP60, NFKBIA, POLR2E and SMAD4. Interacts with host SMC5-SMC6 complex and induces its degradation. Interacts with host TRPC4AP; leading to prevent ubiquitination of TRPC4AP. Interacts with host PLSCR1; this interaction promotes ubiquitination and degradation of HBx and impairs HBx-mediated cell proliferation. A fraction may be phosphorylated in insect cells and HepG2 cells, a human hepatoblastoma cell line. Phosphorylated in vitro by host protein kinase C or mitogen-activated protein kinase. N-acetylated in insect cells.

The protein localises to the host cytoplasm. Its subcellular location is the host nucleus. It localises to the host mitochondrion. Its function is as follows. Multifunctional protein that plays a role in silencing host antiviral defenses and promoting viral transcription. Does not seem to be essential for HBV infection. May be directly involved in development of cirrhosis and liver cancer (hepatocellular carcinoma). Most of cytosolic activities involve modulation of cytosolic calcium. The effect on apoptosis is controversial depending on the cell types in which the studies have been conducted. May induce apoptosis by localizing in mitochondria and causing loss of mitochondrial membrane potential. May also modulate apoptosis by binding host CFLAR, a key regulator of the death-inducing signaling complex (DISC). Promotes viral transcription by using the host E3 ubiquitin ligase DDB1 to target the SMC5-SMC6 complex to proteasomal degradation. This host complex would otherwise bind to viral episomal DNA, and prevents its transcription. Moderately stimulates transcription of many different viral and cellular transcription elements. Promoters and enhancers stimulated by HBx contain DNA binding sites for NF-kappa-B, AP-1, AP-2, c-EBP, ATF/CREB, or the calcium-activated factor NF-AT. The chain is Protein X from Homo sapiens (Human).